A 277-amino-acid chain; its full sequence is Acetyl-coenzyme A carboxylase carboxyl transferase subunit beta (277 aa).

The 253-residue stretch at 25–277 (LVRRCPVCHT…DLLRLHKGES (253 aa)) folds into the CoA carboxyltransferase N-terminal domain. Zn(2+) is bound by residues C29, C32, C47, and C50. Residues 29–50 (CPVCHTTFLTDHWEPTRLCPAC) form a C4-type zinc finger.

Belongs to the AccD/PCCB family. In terms of assembly, acetyl-CoA carboxylase is a heterohexamer composed of biotin carboxyl carrier protein (AccB), biotin carboxylase (AccC) and two subunits each of ACCase subunit alpha (AccA) and ACCase subunit beta (AccD). Zn(2+) is required as a cofactor.

Its subcellular location is the cytoplasm. The enzyme catalyses N(6)-carboxybiotinyl-L-lysyl-[protein] + acetyl-CoA = N(6)-biotinyl-L-lysyl-[protein] + malonyl-CoA. Its pathway is lipid metabolism; malonyl-CoA biosynthesis; malonyl-CoA from acetyl-CoA: step 1/1. Component of the acetyl coenzyme A carboxylase (ACC) complex. Biotin carboxylase (BC) catalyzes the carboxylation of biotin on its carrier protein (BCCP) and then the CO(2) group is transferred by the transcarboxylase to acetyl-CoA to form malonyl-CoA. This chain is Acetyl-coenzyme A carboxylase carboxyl transferase subunit beta, found in Levilactobacillus brevis (strain ATCC 367 / BCRC 12310 / CIP 105137 / JCM 1170 / LMG 11437 / NCIMB 947 / NCTC 947) (Lactobacillus brevis).